A 718-amino-acid chain; its full sequence is Nucleolar protein 11 (718 aa).

Lysine 346 is modified (N6-methyllysine).

As to quaternary structure, interacts with UTP4. Interacts with FBL/fibrillarin in a transcription-dependent manner. May associate with the proposed t-UTP subcomplex of the SSU processome containing at least UTP4, WDR43, HEATR1, UTP15, WDR75.

The protein localises to the nucleus. The protein resides in the nucleolus. Functionally, ribosome biogenesis factor. May be required for both optimal rDNA transcription and small subunit (SSU) pre-rRNA processing at sites A', A0, 1 and 2b. The polypeptide is Nucleolar protein 11 (NOL11) (Bos taurus (Bovine)).